A 154-amino-acid chain; its full sequence is Transcriptional repressor NrdR (154 aa).

Residues 3–34 (CPFCGANDTKVIDSRLVAEGEQVRRRRECLAC) fold into a zinc finger. Residues 49–139 (PRLIKQDGSR…VYRRFQDLNE (91 aa)) enclose the ATP-cone domain.

Belongs to the NrdR family. Zn(2+) is required as a cofactor.

Its function is as follows. Negatively regulates transcription of bacterial ribonucleotide reductase nrd genes and operons by binding to NrdR-boxes. This chain is Transcriptional repressor NrdR, found in Pseudomonas syringae pv. syringae (strain B728a).